A 67-amino-acid chain; its full sequence is uncharacterized protein (67 aa).

This is an uncharacterized protein from Measles virus (strain Halle) (MeV).